The chain runs to 103 residues: Integration host factor subunit beta (103 aa).

It belongs to the bacterial histone-like protein family. Heterodimer of an alpha and a beta chain.

This protein is one of the two subunits of integration host factor, a specific DNA-binding protein that functions in genetic recombination as well as in transcriptional and translational control. The protein is Integration host factor subunit beta of Sinorhizobium medicae (strain WSM419) (Ensifer medicae).